The primary structure comprises 120 residues: MKKIMSTNPKTPELIQKLKEESFKNSAPIWKDVAKKLAKPARKKVEVNVSKISRYASEGDVLLIPGKVLGAGSLKVNVTVAAFSFSETAKSAIEAVGGKCLTIEELIAENPKGSKVTIMA.

The protein belongs to the eukaryotic ribosomal protein eL18 family.

This chain is Large ribosomal subunit protein eL18, found in Methanococcus maripaludis (strain DSM 14266 / JCM 13030 / NBRC 101832 / S2 / LL).